The primary structure comprises 69 residues: MIFKVFYQETLKETPVREKTQSLYVEAESEVKVRQLLKDEPFHIEFVEKISDAHLAYEKENPDFALWEK.

The protein belongs to the RNA polymerase subunit epsilon family. As to quaternary structure, RNAP is composed of a core of 2 alpha, a beta and a beta' subunit. The core is associated with a delta subunit, and at least one of epsilon or omega. When a sigma factor is associated with the core the holoenzyme is formed, which can initiate transcription.

It catalyses the reaction RNA(n) + a ribonucleoside 5'-triphosphate = RNA(n+1) + diphosphate. In terms of biological role, a non-essential component of RNA polymerase (RNAP). This chain is DNA-directed RNA polymerase subunit epsilon, found in Listeria welshimeri serovar 6b (strain ATCC 35897 / DSM 20650 / CCUG 15529 / CIP 8149 / NCTC 11857 / SLCC 5334 / V8).